The primary structure comprises 380 residues: Protein Wnt-5a (380 aa).

Residues 1 to 40 form the signal peptide; it reads MRKNLWTFQFGGEASGLVGSAMVSQHFVVLLMSLYCLTQS. C104 and C115 form a disulfide bridge. 2 N-linked (GlcNAc...) asparagine glycosylation sites follow: N114 and N120. 10 disulfide bridges follow: C154–C162, C164–C182, C238–C252, C240–C247, C309–C340, C325–C335, C339–C379, C355–C370, C357–C367, and C362–C363. S244 carries O-palmitoleoyl serine; by PORCN lipidation. N312 and N326 each carry an N-linked (GlcNAc...) asparagine glycan.

This sequence belongs to the Wnt family. Post-translationally, palmitoleoylation is required for efficient binding to frizzled receptors. Depalmitoleoylation leads to Wnt signaling pathway inhibition. As to expression, found primarily in ectoderm with lower levels of expression in mesoderm. Detected in the head and tail with lower expression in the middle of the embryo. No expression was found in the notochord.

It is found in the secreted. The protein localises to the extracellular space. It localises to the extracellular matrix. Functionally, ligand for members of the frizzled family of seven transmembrane receptors. Can activate or inhibit canonical Wnt signaling, depending on receptor context. Plays a role in normal embryonic development. This is Protein Wnt-5a (wnt5a) from Xenopus laevis (African clawed frog).